A 321-amino-acid polypeptide reads, in one-letter code: Coproporphyrin III ferrochelatase (321 aa).

Histidine 185 and glutamate 267 together coordinate Fe(2+).

This sequence belongs to the ferrochelatase family.

It is found in the cytoplasm. It catalyses the reaction Fe-coproporphyrin III + 2 H(+) = coproporphyrin III + Fe(2+). Its pathway is porphyrin-containing compound metabolism; protoheme biosynthesis. Its function is as follows. Involved in coproporphyrin-dependent heme b biosynthesis. Catalyzes the insertion of ferrous iron into coproporphyrin III to form Fe-coproporphyrin III. The chain is Coproporphyrin III ferrochelatase from Lacticaseibacillus casei (strain BL23) (Lactobacillus casei).